The following is a 612-amino-acid chain: Elongation factor 4 (612 aa).

A tr-type G domain is found at 12 to 194 (SRIRNFSIIA…QIVEKVPAPT (183 aa)). Residues 24–29 (DHGKST) and 141–144 (NKID) each bind GTP.

It belongs to the TRAFAC class translation factor GTPase superfamily. Classic translation factor GTPase family. LepA subfamily.

It is found in the cell membrane. The enzyme catalyses GTP + H2O = GDP + phosphate + H(+). In terms of biological role, required for accurate and efficient protein synthesis under certain stress conditions. May act as a fidelity factor of the translation reaction, by catalyzing a one-codon backward translocation of tRNAs on improperly translocated ribosomes. Back-translocation proceeds from a post-translocation (POST) complex to a pre-translocation (PRE) complex, thus giving elongation factor G a second chance to translocate the tRNAs correctly. Binds to ribosomes in a GTP-dependent manner. The sequence is that of Elongation factor 4 from Bacillus subtilis (strain 168).